The following is a 270-amino-acid chain: Interleukin-1 beta (270 aa).

Residues 1–118 (MARVPEPTSE…KCDDNAFVHD (118 aa)) constitute a propeptide that is removed on maturation.

The protein belongs to the IL-1 family. Monomer. In its precursor form, weakly interacts with full-length MEFV; the mature cytokine does not interact at all. Interacts with integrins ITGAV:ITGBV and ITGA5:ITGB1; integrin-binding is required for IL1B signaling. Interacts with cargo receptor TMED10; the interaction is direct and is required for the secretion of IL1B mature form. Interacts with HSP90AB1; the interaction facilitates cargo translocation into the ERGIC. Interacts with HSP90B1; the interaction facilitates cargo translocation into the ERGIC.

The protein localises to the cytoplasm. Its subcellular location is the cytosol. It localises to the secreted. The protein resides in the lysosome. It is found in the extracellular exosome. Functionally, potent pro-inflammatory cytokine. Initially discovered as the major endogenous pyrogen, induces prostaglandin synthesis, neutrophil influx and activation, T-cell activation and cytokine production, B-cell activation and antibody production, and fibroblast proliferation and collagen production. Promotes Th17 differentiation of T-cells. Synergizes with IL12/interleukin-12 to induce IFNG synthesis from T-helper 1 (Th1) cells. Plays a role in angiogenesis by inducing VEGF production synergistically with TNF and IL6. Involved in transduction of inflammation downstream of pyroptosis: its mature form is specifically released in the extracellular milieu by passing through the gasdermin-D (GSDMD) pore. The protein is Interleukin-1 beta (IL1B) of Mustela putorius furo (European domestic ferret).